A 114-amino-acid chain; its full sequence is Hemerythrin subunit 1 (114 aa).

Residues H26, H55, E59, H74, H78, H102, and D107 each contribute to the Fe cation site.

Belongs to the hemerythrin family.

Its function is as follows. Hemerythrin is a respiratory protein in blood cells of certain marine worms. The oxygen-binding site in each chain contains two iron atoms. The protein is Hemerythrin subunit 1 of Golfingia vulgaris (Marine worm).